The primary structure comprises 610 residues: UvrABC system protein C (610 aa).

The GIY-YIG domain occupies 16 to 94 (SQPGVYRMYD…IKLYQPRYNV (79 aa)). Residues 204-239 (DQVLTQLISRMETASQNLEFEEAARIRDQIQAVRRV) enclose the UVR domain.

The protein belongs to the UvrC family. As to quaternary structure, interacts with UvrB in an incision complex.

Its subcellular location is the cytoplasm. Functionally, the UvrABC repair system catalyzes the recognition and processing of DNA lesions. UvrC both incises the 5' and 3' sides of the lesion. The N-terminal half is responsible for the 3' incision and the C-terminal half is responsible for the 5' incision. In Shigella boydii serotype 18 (strain CDC 3083-94 / BS512), this protein is UvrABC system protein C.